The sequence spans 444 residues: Enolase 1 (444 aa).

His165 and Glu174 together coordinate substrate. Glu217 functions as the Proton donor in the catalytic mechanism. Substrate-binding residues include Glu303 and Asp330. Lys355 serves as the catalytic Proton acceptor. Substrate is bound by residues 382 to 385 and Lys406; that span reads SHRS.

The protein belongs to the enolase family. In terms of assembly, homodimer. Requires Mg(2+) as cofactor.

It localises to the cytoplasm. The enzyme catalyses (2R)-2-phosphoglycerate = phosphoenolpyruvate + H2O. It functions in the pathway carbohydrate degradation; glycolysis; pyruvate from D-glyceraldehyde 3-phosphate: step 4/5. The protein is Enolase 1 (ENO1) of Toxoplasma gondii.